The primary structure comprises 148 residues: Nucleoside diphosphate kinase (148 aa).

Residues lysine 9, phenylalanine 57, arginine 85, threonine 91, arginine 102, and asparagine 112 each contribute to the ATP site. Position 91 is a phosphothreonine (threonine 91). The active-site Pros-phosphohistidine intermediate is the histidine 115. Serine 122 carries the phosphoserine modification.

Belongs to the NDK family. As to quaternary structure, homotetramer. Mg(2+) serves as cofactor.

The protein localises to the cytoplasm. It catalyses the reaction a 2'-deoxyribonucleoside 5'-diphosphate + ATP = a 2'-deoxyribonucleoside 5'-triphosphate + ADP. It carries out the reaction a ribonucleoside 5'-diphosphate + ATP = a ribonucleoside 5'-triphosphate + ADP. In terms of biological role, major role in the synthesis of nucleoside triphosphates other than ATP. The ATP gamma phosphate is transferred to the NDP beta phosphate via a ping-pong mechanism, using a phosphorylated active-site intermediate. The protein is Nucleoside diphosphate kinase of Bacillus cereus (strain ATCC 10987 / NRS 248).